The sequence spans 259 residues: Type III pantothenate kinase (259 aa).

Asp-6–Val-13 contacts ATP. Substrate contacts are provided by residues Tyr-100 and Gly-107–Arg-110. The active-site Proton acceptor is Asp-109. A K(+)-binding site is contributed by Asp-129. An ATP-binding site is contributed by Thr-132. Thr-184 serves as a coordination point for substrate.

Belongs to the type III pantothenate kinase family. As to quaternary structure, homodimer. It depends on NH4(+) as a cofactor. Requires K(+) as cofactor.

The protein resides in the cytoplasm. It catalyses the reaction (R)-pantothenate + ATP = (R)-4'-phosphopantothenate + ADP + H(+). It participates in cofactor biosynthesis; coenzyme A biosynthesis; CoA from (R)-pantothenate: step 1/5. Catalyzes the phosphorylation of pantothenate (Pan), the first step in CoA biosynthesis. The chain is Type III pantothenate kinase from Clostridium kluyveri (strain NBRC 12016).